The primary structure comprises 540 residues: Chaperonin GroEL (540 aa).

ATP contacts are provided by residues 29–32 (TLGP), 86–90 (DGTTT), Gly-413, 476–478 (NAA), and Asp-492.

The protein belongs to the chaperonin (HSP60) family. Forms a cylinder of 14 subunits composed of two heptameric rings stacked back-to-back. Interacts with the co-chaperonin GroES.

It localises to the cytoplasm. It catalyses the reaction ATP + H2O + a folded polypeptide = ADP + phosphate + an unfolded polypeptide.. Its function is as follows. Together with its co-chaperonin GroES, plays an essential role in assisting protein folding. The GroEL-GroES system forms a nano-cage that allows encapsulation of the non-native substrate proteins and provides a physical environment optimized to promote and accelerate protein folding. In Streptococcus gordonii (strain Challis / ATCC 35105 / BCRC 15272 / CH1 / DL1 / V288), this protein is Chaperonin GroEL.